A 119-amino-acid chain; its full sequence is Acidic phospholipase A2 natratoxin (119 aa).

Intrachain disulfides connect Cys-11–Cys-71, Cys-26–Cys-118, Cys-28–Cys-44, Cys-43–Cys-99, Cys-50–Cys-92, Cys-60–Cys-85, and Cys-78–Cys-90. The Ca(2+) site is built by Tyr-27, Gly-29, and Gly-31. His-47 is an active-site residue. Asp-48 lines the Ca(2+) pocket. Residue Asp-93 is part of the active site.

This sequence belongs to the phospholipase A2 family. Group I subfamily. D49 sub-subfamily. Ca(2+) is required as a cofactor. Expressed by the venom gland.

The protein localises to the secreted. It carries out the reaction a 1,2-diacyl-sn-glycero-3-phosphocholine + H2O = a 1-acyl-sn-glycero-3-phosphocholine + a fatty acid + H(+). In terms of biological role, snake venom phospholipase A2 (PLA2) that has an effectively inhibitory effect on A-type K(+) currents (Kv/KCN) in acutely dissociated rat dorsal root ganglion (DRG) neurons. This inhibitory effect is independent of its enzymatic activity. PLA2 catalyzes the calcium-dependent hydrolysis of the 2-acyl groups in 3-sn-phosphoglycerides. This Naja atra (Chinese cobra) protein is Acidic phospholipase A2 natratoxin.